We begin with the raw amino-acid sequence, 303 residues long: Oxygen-dependent coproporphyrinogen-III oxidase (303 aa).

Residue Ser-93 participates in substrate binding. A divalent metal cation-binding residues include His-97 and His-107. The Proton donor role is filled by His-107. Position 109-111 (Asn-109–Arg-111) interacts with substrate. A divalent metal cation is bound by residues His-149 and His-179. Residues Tyr-244–Arg-279 form an important for dimerization region. Gly-262 to Arg-264 is a substrate binding site.

It belongs to the aerobic coproporphyrinogen-III oxidase family. In terms of assembly, homodimer. The cofactor is a divalent metal cation.

The protein resides in the cytoplasm. It catalyses the reaction coproporphyrinogen III + O2 + 2 H(+) = protoporphyrinogen IX + 2 CO2 + 2 H2O. The protein operates within porphyrin-containing compound metabolism; protoporphyrin-IX biosynthesis; protoporphyrinogen-IX from coproporphyrinogen-III (O2 route): step 1/1. Its function is as follows. Involved in the heme biosynthesis. Catalyzes the aerobic oxidative decarboxylation of propionate groups of rings A and B of coproporphyrinogen-III to yield the vinyl groups in protoporphyrinogen-IX. The chain is Oxygen-dependent coproporphyrinogen-III oxidase from Bordetella pertussis (strain Tohama I / ATCC BAA-589 / NCTC 13251).